We begin with the raw amino-acid sequence, 343 residues long: Heat-inducible transcription repressor HrcA (343 aa).

Belongs to the HrcA family.

Negative regulator of class I heat shock genes (grpE-dnaK-dnaJ and groELS operons). Prevents heat-shock induction of these operons. The protein is Heat-inducible transcription repressor HrcA of Mycobacterium avium (strain 104).